We begin with the raw amino-acid sequence, 407 residues long: Chorismate synthase (407 aa).

Positions 40 and 46 each coordinate NADP(+). Residues 138–140 and 259–260 contribute to the FMN site; these read RAS and QA. Positions 275–284 are enriched in basic and acidic residues; sequence RRGSRAHDEM. Positions 275-308 are disordered; the sequence is RRGSRAHDEMYPGTDGVVRSTNRAGGLEGGMTNG. FMN contacts are provided by residues Gly-303, 318 to 322, and Arg-344; that span reads KPIST.

Belongs to the chorismate synthase family. As to quaternary structure, homotetramer. FMNH2 is required as a cofactor.

It catalyses the reaction 5-O-(1-carboxyvinyl)-3-phosphoshikimate = chorismate + phosphate. It participates in metabolic intermediate biosynthesis; chorismate biosynthesis; chorismate from D-erythrose 4-phosphate and phosphoenolpyruvate: step 7/7. Catalyzes the anti-1,4-elimination of the C-3 phosphate and the C-6 proR hydrogen from 5-enolpyruvylshikimate-3-phosphate (EPSP) to yield chorismate, which is the branch point compound that serves as the starting substrate for the three terminal pathways of aromatic amino acid biosynthesis. This reaction introduces a second double bond into the aromatic ring system. This chain is Chorismate synthase, found in Mycobacterium marinum (strain ATCC BAA-535 / M).